An 869-amino-acid chain; its full sequence is Dimethylglycine dehydrogenase, mitochondrial (869 aa).

A mitochondrion-targeting transit peptide spans 1–43 (MLRPGALRLRGLALRGSPRRPSSAGLREGQESPASPPEWKDRA). Residues 14–39 (LRGSPRRPSSAGLREGQESPASPPEW) are disordered. Residues 52–53 (CV), 73–74 (EK), and 80–88 (GSTWHAAGL) contribute to the FAD site. Histidine 84 carries the post-translational modification Tele-8alpha-FAD histidine. N6-acetyllysine is present on lysine 107. The residue at position 141 (lysine 141) is an N6-acetyllysine; alternate. At lysine 141 the chain carries N6-succinyllysine; alternate. Lysine 161 carries the post-translational modification N6-acetyllysine. FAD is bound at residue valine 212. Lysine 216 is modified (N6-acetyllysine). Tryptophan 244 is an FAD binding site. Lysine 310 and lysine 312 each carry N6-succinyllysine. Residues lysine 328 and lysine 353 each carry the N6-acetyllysine modification. FAD is bound at residue 390–395 (FGYGII). Residues lysine 427, lysine 469, and lysine 516 each carry the N6-acetyllysine; alternate modification. Lysine 427, lysine 469, and lysine 516 each carry N6-succinyllysine; alternate. Residue 573 to 575 (ELT) participates in (6S)-5,6,7,8-tetrahydrofolate binding. Lysine 648 is modified (N6-acetyllysine; alternate). At lysine 648 the chain carries N6-succinyllysine; alternate. Residues tyrosine 669, 676–678 (ELY), and tyrosine 737 contribute to the (6S)-5,6,7,8-tetrahydrofolate site. Position 757 is an N6-acetyllysine (lysine 757). Lysine 786 carries the post-translational modification N6-acetyllysine; alternate. N6-succinyllysine; alternate is present on lysine 786. At lysine 788 the chain carries N6-succinyllysine.

The protein belongs to the GcvT family. FAD is required as a cofactor.

The protein resides in the mitochondrion. It carries out the reaction (6S)-5,6,7,8-tetrahydrofolyl-(gamma-L-Glu)(n) + N,N-dimethylglycine + oxidized [electron-transfer flavoprotein] + H(+) = (6R)-5,10-methylenetetrahydrofolyl-(gamma-L-Glu)(n) + sarcosine + reduced [electron-transfer flavoprotein]. It participates in amine and polyamine degradation; betaine degradation; sarcosine from betaine: step 2/2. Functionally, catalyzes the demethylation of N,N-dimethylglycine to sarcosine. Also has activity with sarcosine in vitro. The polypeptide is Dimethylglycine dehydrogenase, mitochondrial (Dmgdh) (Mus musculus (Mouse)).